The primary structure comprises 216 residues: Uracil phosphoribosyltransferase (216 aa).

5-phospho-alpha-D-ribose 1-diphosphate contacts are provided by residues R85, R110, and 135–143; that span reads DPMVATGYS. Residues I200 and 205 to 207 each bind uracil; that span reads GDA. Residue D206 participates in 5-phospho-alpha-D-ribose 1-diphosphate binding.

It belongs to the UPRTase family. Requires Mg(2+) as cofactor.

It carries out the reaction UMP + diphosphate = 5-phospho-alpha-D-ribose 1-diphosphate + uracil. It functions in the pathway pyrimidine metabolism; UMP biosynthesis via salvage pathway; UMP from uracil: step 1/1. Allosterically activated by GTP. Functionally, catalyzes the conversion of uracil and 5-phospho-alpha-D-ribose 1-diphosphate (PRPP) to UMP and diphosphate. The protein is Uracil phosphoribosyltransferase of Paraburkholderia xenovorans (strain LB400).